Reading from the N-terminus, the 391-residue chain is Multidrug resistance protein MdtL (391 aa).

The Cytoplasmic segment spans residues 1-3 (MSR). Residues 4–24 (FLICSFALVLLYPAGIDMYLV) form a helical membrane-spanning segment. The Periplasmic segment spans residues 25-37 (GLPRIAADLNASE). Residues 38 to 58 (AQLHIAFSVYLAGMAAAMLFA) traverse the membrane as a helical segment. Over 59–75 (GKMADRSGRKPVAIPGS) the chain is Cytoplasmic. A helical transmembrane segment spans residues 76 to 96 (ALFIIASVFCSLAETSTLFLA). At 97–98 (GR) the chain is on the periplasmic side. The chain crosses the membrane as a helical span at residues 99–119 (FLQGLGAGCCYVVAFAILRDT). At 120–130 (LDDRRRAKVLS) the chain is on the cytoplasmic side. The helical transmembrane segment at 131–151 (LLNGITCIIPVLAPVLGHLIM) threads the bilayer. The Periplasmic portion of the chain corresponds to 152–157 (LKFPWQ). A helical transmembrane segment spans residues 158–178 (SLFWAMAMMGIAVLMLSLFIL). The Cytoplasmic portion of the chain corresponds to 179–202 (KETRPASPAASDKPRENSESLLNR). Residues 203-222 (FFLSRVVITTLSVSVILTFV) traverse the membrane as a helical segment. Over 223 to 244 (NTSPVLLMEIMGFERGEYATIM) the chain is Periplasmic. Residues 245–265 (ALTAGVSMTFSFSTPFALGIF) form a helical membrane-spanning segment. Residues 266-268 (KPR) lie on the Cytoplasmic side of the membrane. Residues 269 to 289 (TLMITSQVLFLAAGITLAVSP) form a helical membrane-spanning segment. Residues 290-292 (SHA) are Periplasmic-facing. Residues 293-313 (VSLFGITLICAGFSVGFGVAM) traverse the membrane as a helical segment. Residues 314 to 330 (SQALGPFSLRAGVASST) are Cytoplasmic-facing. A helical membrane pass occupies residues 331–351 (LGIAQVCGSSLWIWLAAVVGI). Residues 352–355 (GAWN) lie on the Periplasmic side of the membrane. A helical transmembrane segment spans residues 356–376 (MLIGILIACSIVSLLLIMFVA). At 377–391 (PGRPVAAHEEIHHHA) the chain is on the cytoplasmic side.

This sequence belongs to the major facilitator superfamily. DHA1 family. MdtL (TC 2.A.1.2.22) subfamily.

The protein resides in the cell inner membrane. This is Multidrug resistance protein MdtL from Shigella flexneri serotype 5b (strain 8401).